The following is a 315-amino-acid chain: Prephenate dehydratase (315 aa).

The Prephenate dehydratase domain maps to 3–190; that stretch reads RIAYLGPQGT…ARTRFVLVGR (188 aa). The ACT domain occupies 204–281; that stretch reads SVALRLPNTP…EDVRYLGSWP (78 aa).

As to quaternary structure, homodimer.

It catalyses the reaction prephenate + H(+) = 3-phenylpyruvate + CO2 + H2O. The protein operates within amino-acid biosynthesis; L-phenylalanine biosynthesis; phenylpyruvate from prephenate: step 1/1. The polypeptide is Prephenate dehydratase (pheA) (Mycobacterium sp. (strain JLS)).